We begin with the raw amino-acid sequence, 270 residues long: Pantoate kinase (270 aa).

The protein belongs to the GHMP kinase family. PoK subfamily.

The catalysed reaction is (R)-pantoate + ATP = (R)-4-phosphopantoate + ADP + H(+). Its pathway is cofactor biosynthesis; coenzyme A biosynthesis. Functionally, phosphorylates (R)-pantoate to form (R)-4-phosphopantoate in the CoA biosynthesis pathway. In Methanocaldococcus jannaschii (strain ATCC 43067 / DSM 2661 / JAL-1 / JCM 10045 / NBRC 100440) (Methanococcus jannaschii), this protein is Pantoate kinase.